The primary structure comprises 403 residues: Glucose/galactose-binding lipoprotein (403 aa).

Residues 1–25 (MKENSCTACSRRLALFVGAAVLVVG) form the signal peptide. Cysteine 26 is lipidated: N-palmitoyl cysteine. Cysteine 26 is lipidated: S-diacylglycerol cysteine.

Belongs to the bacterial solute-binding protein 2 family.

The protein resides in the cell membrane. May be involved in the transport of sugars. May have a role in chemotaxis. The chain is Glucose/galactose-binding lipoprotein (mglB) from Treponema pallidum (strain Nichols).